The primary structure comprises 842 residues: Ionotropic receptor 21a (842 aa).

Positions 1 to 15 are cleaved as a signal peptide; sequence MSYYWVALVLFTAQA. N325 carries an N-linked (GlcNAc...) asparagine glycan. 2 helical membrane-spanning segments follow: residues 405–425 and 437–457; these read WPVWVALICVYLGGIFPIVFT and WGEVENMFWYVFGMFTNAFSF. Residue N469 is glycosylated (N-linked (GlcNAc...) asparagine). The helical transmembrane segment at 479 to 499 threads the bilayer; that stretch reads WLFTIIITSCYTGSIIAFVTL. N533, N558, N583, and N588 each carry an N-linked (GlcNAc...) asparagine glycan. Residues 680-700 form a helical membrane-spanning segment; sequence MFLLMALGYFLGATALVSEIV. The tract at residues 722 to 745 is disordered; it reads WSSASSGSMLRTNAEQLSHDKRKA. N-linked (GlcNAc...) asparagine glycans are attached at residues N765 and N797.

This sequence belongs to the glutamate-gated ion channel (TC 1.A.10.1) family. Expressed in the dorsal organ cool cells. In the antenna, expressed in approximately six neurons in the arista as well as five to ten neurons near the third chamber of the sacculus.

Its subcellular location is the cell membrane. Integral part of a neural sensory system in the antenna that provides the neural basis for the response to environmental changes in temperature (thermosensation). Together with Ir25a and Ir93a, mediates the response of the dorsal organ cool cells, a trio of cool-responsive neurons, to cooling and is required for cool avoidance behavior. The chain is Ionotropic receptor 21a from Drosophila melanogaster (Fruit fly).